A 617-amino-acid chain; its full sequence is 1-deoxy-D-xylulose-5-phosphate synthase (617 aa).

Residues histidine 80 and glycine 121–serine 123 each bind thiamine diphosphate. Aspartate 152 is a Mg(2+) binding site. Thiamine diphosphate-binding positions include glycine 153 to alanine 154, asparagine 181, tyrosine 277, and glutamate 360. Asparagine 181 is a binding site for Mg(2+).

The protein belongs to the transketolase family. DXPS subfamily. As to quaternary structure, homodimer. Mg(2+) serves as cofactor. It depends on thiamine diphosphate as a cofactor.

The enzyme catalyses D-glyceraldehyde 3-phosphate + pyruvate + H(+) = 1-deoxy-D-xylulose 5-phosphate + CO2. Its pathway is metabolic intermediate biosynthesis; 1-deoxy-D-xylulose 5-phosphate biosynthesis; 1-deoxy-D-xylulose 5-phosphate from D-glyceraldehyde 3-phosphate and pyruvate: step 1/1. Catalyzes the acyloin condensation reaction between C atoms 2 and 3 of pyruvate and glyceraldehyde 3-phosphate to yield 1-deoxy-D-xylulose-5-phosphate (DXP). The polypeptide is 1-deoxy-D-xylulose-5-phosphate synthase (Blochmanniella floridana).